A 640-amino-acid chain; its full sequence is EF-hand domain-containing protein 1 (640 aa).

Residues 1–45 (MVSNPVHGLPFLPGTSFKDSTKTAFHRSQTLSYRNGYAIVRRPTV) are required for its localization in the mitotic spindle and interaction with alpha-tubulin. DM10 domains lie at 93-198 (DKKV…ESQG), 239-359 (DKQV…KEKF), and 416-520 (DNKV…ESNA). Residues 535–554 (VRKREAPAPEAESKQTEKDP) are disordered. The span at 538-554 (REAPAPEAESKQTEKDP) shows a compositional bias: basic and acidic residues. One can recognise an EF-hand domain in the interval 574-609 (SCKDNIREAFQIYDKEASGYVDRDMFFKICESLNVP).

As to quaternary structure, microtubule inner protein component of sperm flagellar doublet microtubules. Interacts with the C-terminus of CACNA1E. Interacts with alpha-tubulin. Widely expressed. Not detected in lymphocytes.

It is found in the cytoplasm. Its subcellular location is the cytoskeleton. It localises to the cilium axoneme. The protein resides in the flagellum axoneme. The protein localises to the microtubule organizing center. It is found in the centrosome. Its subcellular location is the spindle. It localises to the spindle pole. In terms of biological role, microtubule inner protein (MIP) part of the dynein-decorated doublet microtubules (DMTs) in cilia axoneme, which is required for motile cilia beating. Microtubule-associated protein which regulates cell division and neuronal migration during cortical development. Necessary for radial and tangential cell migration during brain development, possibly acting as a regulator of cell morphology and process formation during migration. May enhance calcium influx through CACNA1E and stimulate programmed cell death. The polypeptide is EF-hand domain-containing protein 1 (Homo sapiens (Human)).